The primary structure comprises 658 residues: UvrABC system protein B (658 aa).

A Helicase ATP-binding domain is found at 25–416 (KSLKNNNHYQ…QKNVAEQIIR (392 aa)). Residue 38 to 45 (GVTGSGKT) participates in ATP binding. The Beta-hairpin motif lies at 91–114 (HFDYYQPESYIPRRDLFIEKDSSI). The 175-residue stretch at 433–607 (QVQDLFDEIK…ELKLRDDEIK (175 aa)) folds into the Helicase C-terminal domain. Residues 623 to 658 (EKIIKELDKKMRERAKNLDFEEAMRLRDEIAQLRTL) enclose the UVR domain.

This sequence belongs to the UvrB family. As to quaternary structure, forms a heterotetramer with UvrA during the search for lesions. Interacts with UvrC in an incision complex.

The protein resides in the cytoplasm. The UvrABC repair system catalyzes the recognition and processing of DNA lesions. A damage recognition complex composed of 2 UvrA and 2 UvrB subunits scans DNA for abnormalities. Upon binding of the UvrA(2)B(2) complex to a putative damaged site, the DNA wraps around one UvrB monomer. DNA wrap is dependent on ATP binding by UvrB and probably causes local melting of the DNA helix, facilitating insertion of UvrB beta-hairpin between the DNA strands. Then UvrB probes one DNA strand for the presence of a lesion. If a lesion is found the UvrA subunits dissociate and the UvrB-DNA preincision complex is formed. This complex is subsequently bound by UvrC and the second UvrB is released. If no lesion is found, the DNA wraps around the other UvrB subunit that will check the other stand for damage. This is UvrABC system protein B from Helicobacter pylori (strain J99 / ATCC 700824) (Campylobacter pylori J99).